The following is a 901-amino-acid chain: Protein translocase subunit SecA (901 aa).

ATP is bound by residues glutamine 85, 103-107 (GEGKT), and aspartate 510. The tract at residues 847–901 (TRINQNNLPVDENSQTTQNSETEDYSDRRIGRNEPCPCGSGKKYKHCHGSRVARQ) is disordered. A compositionally biased stretch (polar residues) spans 848–866 (RINQNNLPVDENSQTTQNS). The Zn(2+) site is built by cysteine 882, cysteine 884, cysteine 893, and histidine 894. The segment covering 888-901 (KKYKHCHGSRVARQ) has biased composition (basic residues).

The protein belongs to the SecA family. In terms of assembly, monomer and homodimer. Part of the essential Sec protein translocation apparatus which comprises SecA, SecYEG and auxiliary proteins SecDF-YajC and YidC. It depends on Zn(2+) as a cofactor.

The protein resides in the cell inner membrane. Its subcellular location is the cytoplasm. The catalysed reaction is ATP + H2O + cellular proteinSide 1 = ADP + phosphate + cellular proteinSide 2.. Its function is as follows. Part of the Sec protein translocase complex. Interacts with the SecYEG preprotein conducting channel. Has a central role in coupling the hydrolysis of ATP to the transfer of proteins into and across the cell membrane, serving both as a receptor for the preprotein-SecB complex and as an ATP-driven molecular motor driving the stepwise translocation of polypeptide chains across the membrane. In Haemophilus influenzae (strain PittGG), this protein is Protein translocase subunit SecA.